Consider the following 452-residue polypeptide: Fructose-2,6-bisphosphatase (452 aa).

The 6-phosphofructo-2-kinase stretch occupies residues 1–223 (MGYSTISNDN…VFYVMNIRPK (223 aa)). 20-28 (GLPARGKSF) contributes to the ATP binding site. Beta-D-fructose 6-phosphate-binding residues include Arg-53 and Arg-78. Asp-104 is a catalytic residue. Residues Thr-106 and Arg-112 each contribute to the beta-D-fructose 6-phosphate site. 143–148 (NAKDIG) is an ATP binding site. Beta-D-fructose 6-phosphate-binding residues include Arg-169 and Tyr-173. Positions 224-452 (PKYIWLSRHG…LNDSPLEDKF (229 aa)) are fructose-2,6-bisphosphatase. Arg-231 contributes to the beta-D-fructose 2,6-bisphosphate binding site. His-232 functions as the Tele-phosphohistidine intermediate in the catalytic mechanism. The beta-D-fructose 2,6-bisphosphate site is built by Asn-238 and Gly-244. The active-site Proton donor/acceptor is the Glu-302. Residues Tyr-313, Arg-327, Lys-331, Tyr-342, Gln-368, and Arg-372 each coordinate beta-D-fructose 2,6-bisphosphate. 324-327 (FKAR) is an ATP binding site. ATP is bound by residues 368 to 372 (QAVLR) and Tyr-404. 2 positions are modified to phosphoserine: Ser-435 and Ser-446.

In the C-terminal section; belongs to the phosphoglycerate mutase family.

It catalyses the reaction beta-D-fructose 2,6-bisphosphate + H2O = beta-D-fructose 6-phosphate + phosphate. Its activity is regulated as follows. Inhibited by fructose 6-P, activated by glycerol 3-P. Its function is as follows. Monofunctional, high-specificity fructose-2,6-bisphosphatase, which releases phosphate from the 2-position of fructose 2,6-bisphosphate. Has no detectable 6-phosphofructo-2-kinase activity. The chain is Fructose-2,6-bisphosphatase from Saccharomyces cerevisiae (strain ATCC 204508 / S288c) (Baker's yeast).